Reading from the N-terminus, the 141-residue chain is MAKKVAAQIKLQLPAGKATPAPPVGPALGQHGVNIMEFCKRFNAETADKAGMILPVVITVYEDKSFTFIIKTPPASFLLKKAAGIESGSSEPKRKIVGKVTRKQIEEIAKIKMPDLNANDLEAAMRIIEGTARSMGIEVVD.

The protein belongs to the universal ribosomal protein uL11 family. In terms of assembly, part of the ribosomal stalk of the 50S ribosomal subunit. Interacts with L10 and the large rRNA to form the base of the stalk. L10 forms an elongated spine to which L12 dimers bind in a sequential fashion forming a multimeric L10(L12)X complex. In terms of processing, one or more lysine residues are methylated.

Functionally, forms part of the ribosomal stalk which helps the ribosome interact with GTP-bound translation factors. The chain is Large ribosomal subunit protein uL11 from Thermotoga neapolitana (strain ATCC 49049 / DSM 4359 / NBRC 107923 / NS-E).